Here is an 87-residue protein sequence, read N- to C-terminus: Acyl-CoA-binding protein (87 aa).

The 85-residue stretch at 3–87 folds into the ACB domain; that stretch reads LKEEFEEHAV…KVKQLLEESA (85 aa). An acyl-CoA is bound by residues 30–34, Lys-56, and Tyr-75; that span reads YGLYK.

The protein belongs to the ACBP family.

Its function is as follows. Binds medium- and long-chain acyl-CoA esters with very high affinity and may function as an intracellular carrier of acyl-CoA esters. The sequence is that of Acyl-CoA-binding protein (ACABP) from Fritillaria agrestis (Stinkbells).